Here is a 198-residue protein sequence, read N- to C-terminus: Glycerol-3-phosphate acyltransferase (198 aa).

Helical transmembrane passes span threonine 4–glycine 24, leucine 71–glycine 91, leucine 113–phenylalanine 133, and valine 147–leucine 167.

Belongs to the PlsY family. As to quaternary structure, probably interacts with PlsX.

The protein localises to the cell membrane. It catalyses the reaction an acyl phosphate + sn-glycerol 3-phosphate = a 1-acyl-sn-glycero-3-phosphate + phosphate. It functions in the pathway lipid metabolism; phospholipid metabolism. In terms of biological role, catalyzes the transfer of an acyl group from acyl-phosphate (acyl-PO(4)) to glycerol-3-phosphate (G3P) to form lysophosphatidic acid (LPA). This enzyme utilizes acyl-phosphate as fatty acyl donor, but not acyl-CoA or acyl-ACP. This Bacillus cereus (strain G9842) protein is Glycerol-3-phosphate acyltransferase.